Consider the following 209-residue polypeptide: MRSGQSSRTEPASLPWHPSGLVAGVDEAGRGPLAGPVMAAAVMLDERQPIMGLADSKKLTPARRASLFDEIRAKALCYSIAQASVQEIDALNILQATLLAMRRAVQGLRLRPALVLVDGNRLPRLDIPAQAIVKGDALQPAISAASILAKVQRDHWCVQVHAEFPQYGFAGHKGYGTAMHLAALRAHGACIHHRRSFAPVARSLPGACR.

An RNase H type-2 domain is found at 20–209 (GLVAGVDEAG…VARSLPGACR (190 aa)). A divalent metal cation contacts are provided by Asp-26, Glu-27, and Asp-118.

This sequence belongs to the RNase HII family. It depends on Mn(2+) as a cofactor. Mg(2+) serves as cofactor.

It localises to the cytoplasm. It catalyses the reaction Endonucleolytic cleavage to 5'-phosphomonoester.. Its function is as follows. Endonuclease that specifically degrades the RNA of RNA-DNA hybrids. This Verminephrobacter eiseniae (strain EF01-2) protein is Ribonuclease HII.